We begin with the raw amino-acid sequence, 106 residues long: 10 kDa heat shock protein, mitochondrial (106 aa).

S2 bears the N-acetylserine mark. At S31 the chain carries Phosphoserine.

It belongs to the GroES chaperonin family. As to quaternary structure, homohexamer. In terms of processing, the N-terminus is blocked.

It localises to the mitochondrion matrix. Functionally, eukaryotic CPN10 homolog which is essential for mitochondrial protein biogenesis, together with CPN60. Binds to CPN60 in the presence of Mg-ATP and suppresses the ATPase activity of the latter. This is 10 kDa heat shock protein, mitochondrial (HSP10) from Saccharomyces cerevisiae (strain ATCC 204508 / S288c) (Baker's yeast).